Consider the following 148-residue polypeptide: Protein E6 (148 aa).

Zinc fingers lie at residues 31–67 (CVYC…CQPC) and 104–140 (CGKC…CTQC). Positions 146 to 148 (TVV) match the PDZ-binding domain motif.

This sequence belongs to the papillomaviridae E6 protein family. In terms of assembly, forms homodimers. Interacts with ubiquitin-protein ligase UBE3A/E6-AP and thus forms a complex with human TP53. Interacts with human NFX1 and MAGI3. Interacts with human IRF3; this interaction inhibits the establishment of antiviral state. Interacts with human TYK2; this interaction inhibits JAK-STAT activation by interferon alpha. Interacts with host DLG1; this interaction leads to the proteasomal degradation of DLG1.

The protein localises to the host cytoplasm. The protein resides in the host nucleus. Functionally, plays a major role in the induction and maintenance of cellular transformation. Acts mainly as an oncoprotein by stimulating the destruction of many host cell key regulatory proteins. E6 associates with host UBE3A/E6-AP ubiquitin-protein ligase, and inactivates tumor suppressors TP53 and TP73 by targeting them to the 26S proteasome for degradation. In turn, DNA damage and chromosomal instabilities increase and lead to cell proliferation and cancer development. The complex E6/E6AP targets several other substrates to degradation via the proteasome including host DLG1 or NFX1, a repressor of human telomerase reverse transcriptase (hTERT). The resulting increased expression of hTERT prevents the shortening of telomere length leading to cell immortalization. Other cellular targets including BAK1, Fas-associated death domain-containing protein (FADD) and procaspase 8, are degraded by E6/E6AP causing inhibition of apoptosis. E6 also inhibits immune response by interacting with host IRF3 and TYK2. These interactions prevent IRF3 transcriptional activities and inhibit TYK2-mediated JAK-STAT activation by interferon alpha resulting in inhibition of the interferon signaling pathway. This Homo sapiens (Human) protein is Protein E6.